Reading from the N-terminus, the 197-residue chain is MHQFTTWTGTTVPLMNDNIDTDQLLPKQFLKLIDKKGFGKYLLYAWRYLDDNYTDNPDFILNQPEYQGASILISGDNFGAGSSREHAAWALADYGFKVIIAGSFGDIHYNNDLNNGILPIIQPKEVRDQLAQLGPDQEITVDLADQLIRTPFGECPFDIEQDWKHKLLNGLDDIGITLQYQDLIAEYEDNRPSYWQN.

The protein belongs to the LeuD family. LeuD type 1 subfamily. As to quaternary structure, heterodimer of LeuC and LeuD.

It carries out the reaction (2R,3S)-3-isopropylmalate = (2S)-2-isopropylmalate. The protein operates within amino-acid biosynthesis; L-leucine biosynthesis; L-leucine from 3-methyl-2-oxobutanoate: step 2/4. Functionally, catalyzes the isomerization between 2-isopropylmalate and 3-isopropylmalate, via the formation of 2-isopropylmaleate. The protein is 3-isopropylmalate dehydratase small subunit of Streptococcus suis (strain 98HAH33).